The sequence spans 268 residues: Tryptophan synthase alpha chain (268 aa).

Active-site proton acceptor residues include Glu49 and Asp60.

This sequence belongs to the TrpA family. In terms of assembly, tetramer of two alpha and two beta chains.

The enzyme catalyses (1S,2R)-1-C-(indol-3-yl)glycerol 3-phosphate + L-serine = D-glyceraldehyde 3-phosphate + L-tryptophan + H2O. The protein operates within amino-acid biosynthesis; L-tryptophan biosynthesis; L-tryptophan from chorismate: step 5/5. Its function is as follows. The alpha subunit is responsible for the aldol cleavage of indoleglycerol phosphate to indole and glyceraldehyde 3-phosphate. The chain is Tryptophan synthase alpha chain from Salmonella paratyphi A (strain ATCC 9150 / SARB42).